Here is a 222-residue protein sequence, read N- to C-terminus: Dual specificity phosphatase 29 (222 aa).

The Tyrosine-protein phosphatase domain maps to 54-202 (HVNEVWPKLY…LRELDKQLVQ (149 aa)). A substrate-binding site is contributed by 146 to 153 (HCAMGRSR). Cys-147 acts as the Phosphocysteine intermediate in catalysis. Residues 201 to 222 (VQQRRGAQHRGEAGEKAGEKEP) form a disordered region. Basic and acidic residues predominate over residues 209–222 (HRGEAGEKAGEKEP).

Belongs to the protein-tyrosine phosphatase family. Non-receptor class dual specificity subfamily. As to quaternary structure, homodimer. Interacts with PRKAA2.

The protein localises to the cytoplasm. The protein resides in the nucleus. It carries out the reaction O-phospho-L-tyrosyl-[protein] + H2O = L-tyrosyl-[protein] + phosphate. It catalyses the reaction O-phospho-L-seryl-[protein] + H2O = L-seryl-[protein] + phosphate. The enzyme catalyses O-phospho-L-threonyl-[protein] + H2O = L-threonyl-[protein] + phosphate. Its function is as follows. Dual specificity phosphatase able to dephosphorylate phosphotyrosine, phosphoserine and phosphothreonine residues within the same substrate, with a preference for phosphotyrosine as a substrate. Involved in the modulation of intracellular signaling cascades. In skeletal muscle regulates systemic glucose homeostasis by activating, AMPK, an energy sensor protein kinase. Affects MAP kinase signaling though modulation of the MAPK1/2 cascade in skeletal muscle promoting muscle cell differentiation, development and atrophy. This Sus scrofa (Pig) protein is Dual specificity phosphatase 29 (DUSP29).